The sequence spans 1732 residues: Transient receptor potential cation channel subfamily M member 3 (1732 aa).

The Cytoplasmic portion of the chain corresponds to 1 to 894 (MPEPWGTVYF…RKIYEFYNAP (894 aa)). Calmodulin-binding regions lie at residues 192–215 (NFEL…MTTG), 300–323 (TGKY…QKIN), 601–624 (RKRF…KLLG), and 793–816 (RKNS…LEFK). Residues 617–625 (PKALKLLGM) form a required for the inhibitory action of G-beta/gamma-subunits of heterotrimeric G-proteins region. Ser796 is a binding site for 1,2-dioctanoyl-sn-glycero-3-phospho-(1D-myo-inositol-4,5-bisphosphate). Residues 895 to 918 (IVKFWFYTLAYIGYLMLFNYIVLV) traverse the membrane as a helical segment. The Extracellular segment spans residues 919–925 (KMERWPS). Residues 926 to 948 (TQEWIVISYIFTLGIEKMREILM) form a helical membrane-spanning segment. Topologically, residues 949–964 (SEPGKLLQKVKVWLQE) are cytoplasmic. Residues 965 to 985 (YWNVTDLIAILLFSVGMILRL) traverse the membrane as a helical segment. Topologically, residues 986–989 (QDQP) are extracellular. The chain crosses the membrane as a helical span at residues 990-1013 (FRSDGRVIYCVNIIYWYIRLLDIF). At 1014-1028 (GVNKYLGPYVMMIGK) the chain is on the cytoplasmic side. The 1,2-dioctanoyl-sn-glycero-3-phospho-(1D-myo-inositol-4,5-bisphosphate) site is built by Lys1017 and Tyr1018. The chain crosses the membrane as a helical span at residues 1029 to 1056 (MMIDMMYFVIIMLVVLMSFGVARQAILF). Residues 1057–1111 (PNEEPSWKLAKNIFYMPYWMIYGEVFADQIDPPCGQNETREDGKIIQLPPCKTGA) are Extracellular-facing. Residues 1112-1137 (WIVPAIMACYLLVANILLVNLLIAVF) form a helical membrane-spanning segment. Topologically, residues 1138–1732 (NNTFFEVKSI…AFQSFESKHN (595 aa)) are cytoplasmic. A coiled-coil region spans residues 1241–1301 (ERIRVTSERV…LERLTGLERA (61 aa)). A compositionally biased stretch (low complexity) spans 1459-1476 (PVPSTAPSSSAYATLAPT). Disordered regions lie at residues 1459-1478 (PVPS…PTDR) and 1611-1732 (REAE…SKHN). Polar residues-rich tracts occupy residues 1635 to 1653 (AISS…NNIT), 1690 to 1701 (NTASLRNPFQRS), and 1720 to 1732 (RTSA…SKHN).

It belongs to the transient receptor (TC 1.A.4) family. LTrpC subfamily. TRPM3 sub-subfamily. In terms of assembly, homotetramer. Interacts with TRPM1; the interaction results in the formation of a heteromultimeric cation channel complex that are functionally different from the homomeric channels. In terms of tissue distribution, expressed primarily in the kidney and, at lower levels, in brain, testis, ovary, pancreas and spinal cord. Expression in the brain and kidney was determined at protein level. In the kidney, expressed predominantly in the collecting tubular epithelium in the medulla, medullary rays, and periglomerular regions; in the brain, highest levels are found in the cerebellum, choroid plexus, the locus coeruleus, the posterior thalamus and the substantia nigra. Down-regulated in renal tumors compared to normal kidney. Expressed in the lens.

The protein localises to the cell membrane. It catalyses the reaction Ca(2+)(in) = Ca(2+)(out). The catalysed reaction is Mn(2+)(in) = Mn(2+)(out). It carries out the reaction Zn(2+)(in) = Zn(2+)(out). The enzyme catalyses Mg(2+)(in) = Mg(2+)(out). Activated by the neurosteroid pregnelonone sulfate (PregS); PregS activates the channel by shifting its current-voltage activation curve toward more negative membrane potentials and also potentiates temperature-induced activation. Activated by sphingosine. Activated by heat. Intracellular Ca(2+) inhibits TRPM3 probably via interaction with Ca(2+)/calmodulin. Intracellular Mg(2+) inhibits TRPM3 activity. Both intracellular and extracellular protons block TRPM3 through propable binding sites in the pore region. Positively regulated by phosphoinositide phosphoinositol 4,5-biphosphate (PI(4,5)P2). Strongly inhibited by activation of G(i)-coupled receptors via direct binding with G-betagamma-subunits of heterotrimeric G-proteins. Functionally, constitutively active, non-selective divalent cation-conducting channel that is permeable to Ca(2+), Mn(2+), and Mg(2+), with a high permeability for Ca(2+). However, can be enhanced by increasing temperature and by ligands, including the endogenous neurosteroid pregnenolone sulfate and sphingosine-1 and suppressed by intracellular Mg(2+). Implicated in a variety of cellular processes, including insulin/peptide secretion, vascular constriction and dilation, noxious heat sensing, inflammatory and spontaneous pain sensitivity. In neurons of the dorsal root ganglia, functions as thermosensitive channel for the detection of noxious heat and spontaneous pain. Suggested to function as an ionotropic steroid receptor in beta-cell, indeed pregnenolone sulfate leads to Ca(2+) influx and enhanced insulin secretion. Mediates Zn(2+) uptake into the lumen of pancreatic beta cell secretory granules, thereby regulating insulin secretion. Forms heteromultimeric ion channels with TRPM1 which are permeable for Ca(2+) and Zn(2+) ions. Exists as multiple splice variants which differ significantly in their biophysical properties. The chain is Transient receptor potential cation channel subfamily M member 3 from Homo sapiens (Human).